The sequence spans 862 residues: FAS1 domain-containing protein YLR001C (862 aa).

Residues 1–23 (MNMAIQTIKYIFWLLPILGLTQA) form the signal peptide. Residues 24–762 (LLQNPGDDFP…KYHLRLPGIA (739 aa)) are Vacuolar-facing. The 129-residue stretch at 34–162 (FSTVIDILSE…ASLQGINNLL (129 aa)) folds into the FAS1 1 domain. N-linked (GlcNAc...) asparagine glycans are attached at residues Asn-68, Asn-112, Asn-152, Asn-200, Asn-291, Asn-333, Asn-450, Asn-521, Asn-542, Asn-569, Asn-663, Asn-679, and Asn-688. 2 consecutive FAS1 domains span residues 463–604 (PGDL…DQLD) and 606–744 (PVDL…DKPI). The helical transmembrane segment at 763 to 783 (VGFGVIIGVTIAISLLFCIII) threads the bilayer. Topologically, residues 784 to 862 (TRGGKVKDKN…QKGGRSVSTS (79 aa)) are cytoplasmic.

The protein resides in the vacuole membrane. This chain is FAS1 domain-containing protein YLR001C, found in Saccharomyces cerevisiae (strain ATCC 204508 / S288c) (Baker's yeast).